The primary structure comprises 513 residues: ATP synthase subunit alpha (513 aa).

Residue 169-176 (GDRQVGKT) coordinates ATP.

Belongs to the ATPase alpha/beta chains family. F-type ATPases have 2 components, CF(1) - the catalytic core - and CF(0) - the membrane proton channel. CF(1) has five subunits: alpha(3), beta(3), gamma(1), delta(1), epsilon(1). CF(0) has three main subunits: a(1), b(2) and c(9-12). The alpha and beta chains form an alternating ring which encloses part of the gamma chain. CF(1) is attached to CF(0) by a central stalk formed by the gamma and epsilon chains, while a peripheral stalk is formed by the delta and b chains.

It is found in the cell inner membrane. The catalysed reaction is ATP + H2O + 4 H(+)(in) = ADP + phosphate + 5 H(+)(out). Its function is as follows. Produces ATP from ADP in the presence of a proton gradient across the membrane. The alpha chain is a regulatory subunit. The sequence is that of ATP synthase subunit alpha from Aeromonas salmonicida (strain A449).